The chain runs to 137 residues: Nucleoside diphosphate kinase (137 aa).

Positions 9, 58, 86, 92, 103, and 113 each coordinate ATP. The active-site Pros-phosphohistidine intermediate is His-121.

It belongs to the NDK family. Homotetramer. The cofactor is Mg(2+).

Its subcellular location is the cytoplasm. The catalysed reaction is a 2'-deoxyribonucleoside 5'-diphosphate + ATP = a 2'-deoxyribonucleoside 5'-triphosphate + ADP. The enzyme catalyses a ribonucleoside 5'-diphosphate + ATP = a ribonucleoside 5'-triphosphate + ADP. In terms of biological role, major role in the synthesis of nucleoside triphosphates other than ATP. The ATP gamma phosphate is transferred to the NDP beta phosphate via a ping-pong mechanism, using a phosphorylated active-site intermediate. The polypeptide is Nucleoside diphosphate kinase (Streptococcus pneumoniae (strain Hungary19A-6)).